The sequence spans 475 residues: NADH-ubiquinone oxidoreductase chain 2 (475 aa).

The next 13 helical transmembrane spans lie at 45-65 (LAVLALSFVAYLAWESIGIQY), 82-102 (APIVLLLIILVITLLVYLTTT), 112-132 (IALLMLVNLIGLILFPMVNDL), 133-153 (IPLYVIIELQSYSLYLLTGVY), 162-182 (AAILYFVTGGIASVLILLSSA), 198-220 (TYYSISGINTWTSFDILLIALVF), 240-260 (LYITAYISIVAKVSIMSFIYL), 262-282 (IHLFSTQLLILAFYLSVAVAA), 291-311 (IKSILAYSGILNFGYLLTAVL), 318-338 (YIYIIQYSLTHVTIFLCILAI), 365-385 (LCIALIVCLFSLIGIPPLPGF), 402-422 (LEALTIIVFSVIATYYYAYII), and 447-467 (FIISILMVILITFYMYLPTLL).

The protein belongs to the complex I subunit 2 family.

Its subcellular location is the mitochondrion inner membrane. The enzyme catalyses a ubiquinone + NADH + 5 H(+)(in) = a ubiquinol + NAD(+) + 4 H(+)(out). Its function is as follows. Core subunit of the mitochondrial membrane respiratory chain NADH dehydrogenase (Complex I) that is believed to belong to the minimal assembly required for catalysis. Complex I functions in the transfer of electrons from NADH to the respiratory chain. The immediate electron acceptor for the enzyme is believed to be ubiquinone. The polypeptide is NADH-ubiquinone oxidoreductase chain 2 (NAD2) (Candida albicans (strain SC5314 / ATCC MYA-2876) (Yeast)).